A 218-amino-acid chain; its full sequence is MDKSGSPNASRTSRRRRPRRGSRSASGADAGLRALTQQMLKLNKTLAIGRPTLNHPTFAGSESCKPGYTFTSITLKPPEIEKGSYFGRRLSLPDSVTDYDKKQVSRIQIRINPLPKFDSTVWVTVRKVPSSSDLSVAAITAMFGDGKSPVLVYQYAASGVQANNKLLYNLSEMRADIGDMRKYAVLVYSKDDKLEKDEIVLHVDVEHQRIPISRMLPT.

M1 is subject to N-acetylmethionine; by host. Positions 1 to 31 are disordered; it reads MDKSGSPNASRTSRRRRPRRGSRSASGADAG. Residues 12–22 are compositionally biased toward basic residues; that stretch reads TSRRRRPRRGS.

Belongs to the cucumovirus capsid protein family.

It localises to the virion. In terms of biological role, capsid protein. Probably binds RNA and plays a role in packaging. The protein is Capsid protein of Cucumber mosaic virus (strain Trk7) (CMV).